The primary structure comprises 406 residues: Protein transport protein HofC homolog (406 aa).

3 consecutive transmembrane segments (helical) span residues 167–187, 214–234, and 379–399; these read MVLG…VPQF, QNIG…YFYL, and MMVI…LPIF.

The protein belongs to the GSP F family.

It localises to the cell inner membrane. The protein is Protein transport protein HofC homolog (hofC) of Haemophilus influenzae (strain ATCC 51907 / DSM 11121 / KW20 / Rd).